A 261-amino-acid polypeptide reads, in one-letter code: 5'-nucleotidase SurE (261 aa).

A divalent metal cation contacts are provided by Asp8, Asp9, Ser40, and Asn94.

The protein belongs to the SurE nucleotidase family. A divalent metal cation serves as cofactor.

It localises to the cytoplasm. It carries out the reaction a ribonucleoside 5'-phosphate + H2O = a ribonucleoside + phosphate. In terms of biological role, nucleotidase that shows phosphatase activity on nucleoside 5'-monophosphates. The polypeptide is 5'-nucleotidase SurE (Anaplasma marginale (strain St. Maries)).